Here is a 144-residue protein sequence, read N- to C-terminus: MVLLESEQFLTELTRLFQKCRTSGSVYITLKKYDGRTKPIPKKGTVEGFEPADNKCLLRATDGKKKISTVVSSKEVNKFQMAYSNLLRANMDGLKKRDKKNKTKKTKAAAAAAAAAVAAAAAPAAAATTATPATPAATAATAAQ.

A Phosphotyrosine modification is found at Y27.

This sequence belongs to the SRP14 family. Heterodimer with SRP9; binds RNA as heterodimer. Component of a signal recognition particle (SRP) complex that consists of a 7SL RNA molecule of 300 nucleotides and six protein subunits: SRP72, SRP68, SRP54, SRP19, SRP14 and SRP9.

It localises to the cytoplasm. Its function is as follows. Component of the signal recognition particle (SRP) complex, a ribonucleoprotein complex that mediates the cotranslational targeting of secretory and membrane proteins to the endoplasmic reticulum (ER). SRP9 together with SRP14 and the Alu portion of the SRP RNA, constitutes the elongation arrest domain of SRP. The complex of SRP9 and SRP14 is required for SRP RNA binding. This is Signal recognition particle 14 kDa protein (SRP14) from Macaca fascicularis (Crab-eating macaque).